A 561-amino-acid polypeptide reads, in one-letter code: Dihydroxy-acid dehydratase (561 aa).

A [2Fe-2S] cluster-binding site is contributed by Cys-51. A Mg(2+)-binding site is contributed by Asp-83. A [2Fe-2S] cluster-binding site is contributed by Cys-124. Residues Asp-125 and Lys-126 each coordinate Mg(2+). Lys-126 carries the post-translational modification N6-carboxylysine. Cys-196 is a [2Fe-2S] cluster binding site. Position 448 (Glu-448) interacts with Mg(2+). Residue Ser-473 is the Proton acceptor of the active site.

It belongs to the IlvD/Edd family. Homodimer. Requires [2Fe-2S] cluster as cofactor. Mg(2+) is required as a cofactor.

It catalyses the reaction (2R)-2,3-dihydroxy-3-methylbutanoate = 3-methyl-2-oxobutanoate + H2O. The enzyme catalyses (2R,3R)-2,3-dihydroxy-3-methylpentanoate = (S)-3-methyl-2-oxopentanoate + H2O. It functions in the pathway amino-acid biosynthesis; L-isoleucine biosynthesis; L-isoleucine from 2-oxobutanoate: step 3/4. Its pathway is amino-acid biosynthesis; L-valine biosynthesis; L-valine from pyruvate: step 3/4. In terms of biological role, functions in the biosynthesis of branched-chain amino acids. Catalyzes the dehydration of (2R,3R)-2,3-dihydroxy-3-methylpentanoate (2,3-dihydroxy-3-methylvalerate) into 2-oxo-3-methylpentanoate (2-oxo-3-methylvalerate) and of (2R)-2,3-dihydroxy-3-methylbutanoate (2,3-dihydroxyisovalerate) into 2-oxo-3-methylbutanoate (2-oxoisovalerate), the penultimate precursor to L-isoleucine and L-valine, respectively. The polypeptide is Dihydroxy-acid dehydratase (Sulfolobus acidocaldarius (strain ATCC 33909 / DSM 639 / JCM 8929 / NBRC 15157 / NCIMB 11770)).